The following is a 585-amino-acid chain: MCLLARVRHIEITPDVNGNMFFWHFQNKHIANKQRTVIWLNGGPGCSSEDGALMEIGPYRLKDKDTLVYNEGAWNEFANVLFVDNPVGTGFSYVDTNAYVRELDVMADQFVTFLEKWFKLFPEYEHDDIFIAGESYAGQYIPYIAKAILERNKKGGESSYKWNLAGLLIGNGWISPPEQYEAYLQFAYEKGIVKKGSDAASKLEVQQRICSKQLAVGPALVDNTDCEKILQDLLQLTATSKGGEQRCVNMYDVRLTDTYPSCGMNWPPDLDAVTPYLRRNDVIQALHVNPNKVTGWVECNGQVGANFKPSSKPSVELLPDLLKEVPIILFSGSEDLICNHLGTEALISNLQWNGGKGFEITPGTWAPRRDWTFEGEAAGFWQEARNLTYVVFYNSSHMVPFDYPRRTRDMLDRFMGVDISSIGGKPTDSRLDGEKVPETTVGGVAGNGTDAQQAEKEKLDTARWEAYRKSGEIVLVIVAFSAAGWGWWVWRERKKRRGYMGVSGGENISPSGEARGREGFRDKRSAADLEAGDFDENELDDLHMRTPTTVMGGEGNDPRYSVGAASEDSEDEEDVKGKGKEKMSG.

An N-terminal signal peptide occupies residues 1-18 (MCLLARVRHIEITPDVNG). The Lumenal portion of the chain corresponds to 19–469 (NMFFWHFQNK…DTARWEAYRK (451 aa)). Catalysis depends on residues S135 and D335. 2 N-linked (GlcNAc...) asparagine glycosylation sites follow: N386 and N394. Residue H397 is part of the active site. A glycan (N-linked (GlcNAc...) asparagine) is linked at N447. The helical transmembrane segment at 470 to 490 (SGEIVLVIVAFSAAGWGWWVW) threads the bilayer. The Cytoplasmic segment spans residues 491 to 585 (RERKKRRGYM…KGKGKEKMSG (95 aa)). Positions 526–585 (AADLEAGDFDENELDDLHMRTPTTVMGGEGNDPRYSVGAASEDSEDEEDVKGKGKEKMSG) are disordered. The segment covering 530-539 (EAGDFDENEL) has biased composition (acidic residues). A compositionally biased stretch (basic and acidic residues) spans 575-585 (VKGKGKEKMSG).

The protein belongs to the peptidase S10 family.

Its subcellular location is the golgi apparatus. It localises to the trans-Golgi network membrane. It carries out the reaction Preferential release of a C-terminal arginine or lysine residue.. Functionally, protease with a carboxypeptidase B-like function involved in the C-terminal processing of the lysine and arginine residues from protein precursors. Promotes cell fusion and is involved in the programmed cell death. In Podospora anserina (strain S / ATCC MYA-4624 / DSM 980 / FGSC 10383) (Pleurage anserina), this protein is Pheromone-processing carboxypeptidase KEX1 (KEX1).